Consider the following 240-residue polypeptide: Pyridoxine 5'-phosphate synthase (240 aa).

Residue Asn-6 participates in 3-amino-2-oxopropyl phosphate binding. 8 to 9 (DH) contacts 1-deoxy-D-xylulose 5-phosphate. Residue Arg-17 participates in 3-amino-2-oxopropyl phosphate binding. His-42 serves as the catalytic Proton acceptor. 1-deoxy-D-xylulose 5-phosphate is bound by residues Arg-44 and His-49. Glu-69 acts as the Proton acceptor in catalysis. Residue Thr-99 coordinates 1-deoxy-D-xylulose 5-phosphate. His-190 functions as the Proton donor in the catalytic mechanism. Residues Gly-191 and 212–213 (GH) contribute to the 3-amino-2-oxopropyl phosphate site.

The protein belongs to the PNP synthase family. In terms of assembly, homooctamer; tetramer of dimers.

The protein localises to the cytoplasm. The enzyme catalyses 3-amino-2-oxopropyl phosphate + 1-deoxy-D-xylulose 5-phosphate = pyridoxine 5'-phosphate + phosphate + 2 H2O + H(+). It functions in the pathway cofactor biosynthesis; pyridoxine 5'-phosphate biosynthesis; pyridoxine 5'-phosphate from D-erythrose 4-phosphate: step 5/5. In terms of biological role, catalyzes the complicated ring closure reaction between the two acyclic compounds 1-deoxy-D-xylulose-5-phosphate (DXP) and 3-amino-2-oxopropyl phosphate (1-amino-acetone-3-phosphate or AAP) to form pyridoxine 5'-phosphate (PNP) and inorganic phosphate. The polypeptide is Pyridoxine 5'-phosphate synthase (Pseudomonas entomophila (strain L48)).